The sequence spans 249 residues: Putative [LysW]-aminoadipate/[LysW]-glutamate kinase (249 aa).

Positions 64 and 166 each coordinate substrate.

It belongs to the acetylglutamate kinase family. LysZ subfamily.

It localises to the cytoplasm. The enzyme catalyses [amino-group carrier protein]-C-terminal-N-(1,4-dicarboxybutan-1-yl)-L-glutamine + ATP = [amino-group carrier protein]-C-terminal-N-(1-carboxy-5-phosphooxy-5-oxopentan-1-yl)-L-glutamine + ADP. The catalysed reaction is [amino-group carrier protein]-C-terminal-gamma-(L-glutamyl)-L-glutamate + ATP = [amino-group carrier protein]-C-terminal-gamma-(5-phospho-L-glutamyl)-L-glutamate + ADP. It functions in the pathway amino-acid biosynthesis; L-lysine biosynthesis via AAA pathway; L-lysine from L-alpha-aminoadipate (Thermus route): step 2/5. Its pathway is amino-acid biosynthesis; L-arginine biosynthesis. Functionally, involved in both the arginine and lysine biosynthetic pathways. Phosphorylates the LysW-bound precursors glutamate (for arginine biosynthesis), respectively alpha-aminoadipate (for lysine biosynthesis). The polypeptide is Putative [LysW]-aminoadipate/[LysW]-glutamate kinase (Pyrococcus horikoshii (strain ATCC 700860 / DSM 12428 / JCM 9974 / NBRC 100139 / OT-3)).